Reading from the N-terminus, the 123-residue chain is uncharacterized protein (123 aa).

Disordered regions lie at residues 1-33 (MAPP…RRRK) and 82-123 (EKAA…EDKS). Residues 18–33 (KLFKRRRVLSRDRRRK) show a composition bias toward basic residues.

This is an uncharacterized protein from Mus musculus (Mouse).